A 464-amino-acid polypeptide reads, in one-letter code: MDGTEGSAGQPGPAERSHRSSVSSVGARAADVLVYLADDTVVPLAVENLPSLSAHELHRAVREVLQLPDIALDVFALWLVSPLLEVQLKPKHQPYKLGRQWPELLLRFTSAPDDDVAMDEPFLQFRRNVFFPKRRELQIHDEEVLRLLYEEAKGNVLAARYPCDVEDCEALGALVCRVQLGPYQPGRPAACDLREKLDSFLPAHLCKRGQSLFAALRGRGARAGPGEQGLLNAYRQVQEVSSDGGCEAALGTHYRAYLLKCHELPFYGCAFFHGEVDKPAQGFLHRGGRKPVSVAISLEGVHVIDSREKHVLLGLRFQELSWDHTSPEEEEPILWLEFDGDSEGTPVNKLLKIYSKQAELMSSLIEYCIELSQAAEPAGPQDSATGSPSDPSSSLAPVQRPKLRRQGSVVSSRIQHLSTIDYVEDGKGIRRVKPKRTTSFFSRQLSLGQGSYTVVQPGDSLEQG.

Residue M1 is modified to N-acetylmethionine. Positions 1-22 (MDGTEGSAGQPGPAERSHRSSV) are disordered. S24 is modified (phosphoserine). The FERM domain occupies 30 to 376 (ADVLVYLADD…YCIELSQAAE (347 aa)). The interval 376–408 (EPAGPQDSATGSPSDPSSSLAPVQRPKLRRQGS) is disordered. S383, S387, and S408 each carry phosphoserine. Phosphothreonine is present on T419. Phosphoserine is present on residues S439 and S446.

As to quaternary structure, interacts with iRhom1/RHBDF1 and iRhom2/RHBDF2 (via cytoplasmic N-termini); this interaction leads to mutual protein stabilization. Interacts with ADAM17; this interaction is indirect and mediated by iRhom proteins. Interacts with LRP6; this interaction affects LRP6-binding to AXIN1. In terms of tissue distribution, widely expressed, with high expression in heart and spleen.

It localises to the cytoplasm. Its subcellular location is the cytosol. It is found in the cell membrane. Its function is as follows. Promotes the cell surface stability of iRhom1/RHBDF1 and iRhom2/RHBDF2 and prevents their degradation via the endolysosomal pathway. By acting on iRhoms, involved in ADAM17-mediated shedding of TNF, amphiregulin/AREG, HBEGF and TGFA from the cell surface. Negatively regulates Wnt signaling, possibly by antagonizing the recruitment of AXIN1 to LRP6. The sequence is that of FERM domain-containing protein 8 (FRMD8) from Homo sapiens (Human).